A 343-amino-acid chain; its full sequence is Ribosomal RNA small subunit methyltransferase C (343 aa).

This sequence belongs to the methyltransferase superfamily. RsmC family. Monomer.

Its subcellular location is the cytoplasm. The catalysed reaction is guanosine(1207) in 16S rRNA + S-adenosyl-L-methionine = N(2)-methylguanosine(1207) in 16S rRNA + S-adenosyl-L-homocysteine + H(+). Its function is as follows. Specifically methylates the guanine in position 1207 of 16S rRNA in the 30S particle. In Shigella flexneri, this protein is Ribosomal RNA small subunit methyltransferase C.